A 165-amino-acid chain; its full sequence is Putative protein FAM86C1P (165 aa).

The protein belongs to the class I-like SAM-binding methyltransferase superfamily. EEF2KMT family. Interacts with EEF2KMT.

The sequence is that of Putative protein FAM86C1P from Homo sapiens (Human).